The following is a 177-amino-acid chain: Large ribosomal subunit protein uL6 (177 aa).

Belongs to the universal ribosomal protein uL6 family. As to quaternary structure, part of the 50S ribosomal subunit.

Its function is as follows. This protein binds to the 23S rRNA, and is important in its secondary structure. It is located near the subunit interface in the base of the L7/L12 stalk, and near the tRNA binding site of the peptidyltransferase center. The protein is Large ribosomal subunit protein uL6 of Rhodopseudomonas palustris (strain BisB5).